A 154-amino-acid chain; its full sequence is Large ribosomal subunit protein uL13 (154 aa).

The segment at 132 to 154 (PHEAQQPEVLDVKSMNAKNTRSA) is disordered.

The protein belongs to the universal ribosomal protein uL13 family. As to quaternary structure, part of the 50S ribosomal subunit.

Its function is as follows. This protein is one of the early assembly proteins of the 50S ribosomal subunit, although it is not seen to bind rRNA by itself. It is important during the early stages of 50S assembly. This is Large ribosomal subunit protein uL13 from Paracoccus denitrificans (strain Pd 1222).